The primary structure comprises 258 residues: Immediate-early protein IE-0 (258 aa).

The segment at 191-237 (CNICEDSSAEEQFLKPNVCCGYRVCNACYAKLWEFCTGAYPVCPICK) adopts an RING-type zinc-finger fold.

This chain is Immediate-early protein IE-0 (IE-0), found in Lymantria dispar multicapsid nuclear polyhedrosis virus (LdMNPV).